We begin with the raw amino-acid sequence, 396 residues long: Lipid-A-disaccharide synthase (396 aa).

The protein belongs to the LpxB family.

The catalysed reaction is a lipid X + a UDP-2-N,3-O-bis[(3R)-3-hydroxyacyl]-alpha-D-glucosamine = a lipid A disaccharide + UDP + H(+). It functions in the pathway bacterial outer membrane biogenesis; LPS lipid A biosynthesis. Functionally, condensation of UDP-2,3-diacylglucosamine and 2,3-diacylglucosamine-1-phosphate to form lipid A disaccharide, a precursor of lipid A, a phosphorylated glycolipid that anchors the lipopolysaccharide to the outer membrane of the cell. The chain is Lipid-A-disaccharide synthase from Nitrobacter hamburgensis (strain DSM 10229 / NCIMB 13809 / X14).